The sequence spans 179 residues: ATP synthase subunit delta (179 aa).

It belongs to the ATPase delta chain family. F-type ATPases have 2 components, F(1) - the catalytic core - and F(0) - the membrane proton channel. F(1) has five subunits: alpha(3), beta(3), gamma(1), delta(1), epsilon(1). F(0) has three main subunits: a(1), b(2) and c(10-14). The alpha and beta chains form an alternating ring which encloses part of the gamma chain. F(1) is attached to F(0) by a central stalk formed by the gamma and epsilon chains, while a peripheral stalk is formed by the delta and b chains.

It localises to the cell inner membrane. F(1)F(0) ATP synthase produces ATP from ADP in the presence of a proton or sodium gradient. F-type ATPases consist of two structural domains, F(1) containing the extramembraneous catalytic core and F(0) containing the membrane proton channel, linked together by a central stalk and a peripheral stalk. During catalysis, ATP synthesis in the catalytic domain of F(1) is coupled via a rotary mechanism of the central stalk subunits to proton translocation. Its function is as follows. This protein is part of the stalk that links CF(0) to CF(1). It either transmits conformational changes from CF(0) to CF(1) or is implicated in proton conduction. This Acidithiobacillus ferridurans protein is ATP synthase subunit delta.